We begin with the raw amino-acid sequence, 850 residues long: Pentatricopeptide repeat-containing protein At5g16860 (850 aa).

17 PPR repeats span residues 58–88, 91–125, 126–160, 161–191, 192–227, 228–262, 263–293, 294–328, 329–363, 364–398, 406–436, 439–473, 476–510, 512–542, 543–577, 578–608, and 614–644; these read TLNL…FPPS, GVYH…SWTP, DNYT…GFIS, NVFV…MSVW, DVVS…GCRP, DNIT…EMIQ, NMFV…MSVK, DVVS…KIKM, DVVT…GIKP, NEVT…PIDL, ENMV…LSPK, DVVT…DCQT, NAFT…QQNA, PLFV…MMAK, NEVT…GFKL, DGVT…MKTV, and GPEH…MPME. The tract at residues 649 to 724 is type E motif; it reads VWVAFLSCCR…RPGCSWVEGI (76 aa). Residues 725 to 755 are type E(+) motif; that stretch reads KGTTTFFVGDKTHPHAKEIYQVLLDHMQRIK. Residues 756-850 are type DYW motif; that stretch reads DIGYVPETGF…NGSCSCKGYW (95 aa).

This sequence belongs to the PPR family. PCMP-H subfamily.

In Arabidopsis thaliana (Mouse-ear cress), this protein is Pentatricopeptide repeat-containing protein At5g16860 (PCMP-H92).